A 416-amino-acid polypeptide reads, in one-letter code: Serine hydroxymethyltransferase (416 aa).

Residues leucine 118 and 122–124 (GHL) contribute to the (6S)-5,6,7,8-tetrahydrofolate site. Lysine 226 carries the post-translational modification N6-(pyridoxal phosphate)lysine. (6S)-5,6,7,8-tetrahydrofolate is bound by residues glutamate 242 and 350-352 (SPF).

This sequence belongs to the SHMT family. In terms of assembly, homodimer. Pyridoxal 5'-phosphate serves as cofactor.

It localises to the cytoplasm. It catalyses the reaction (6R)-5,10-methylene-5,6,7,8-tetrahydrofolate + glycine + H2O = (6S)-5,6,7,8-tetrahydrofolate + L-serine. Its pathway is one-carbon metabolism; tetrahydrofolate interconversion. It functions in the pathway amino-acid biosynthesis; glycine biosynthesis; glycine from L-serine: step 1/1. In terms of biological role, catalyzes the reversible interconversion of serine and glycine with tetrahydrofolate (THF) serving as the one-carbon carrier. This reaction serves as the major source of one-carbon groups required for the biosynthesis of purines, thymidylate, methionine, and other important biomolecules. Also exhibits THF-independent aldolase activity toward beta-hydroxyamino acids, producing glycine and aldehydes, via a retro-aldol mechanism. This is Serine hydroxymethyltransferase from Helicobacter pylori (strain Shi470).